Here is a 154-residue protein sequence, read N- to C-terminus: Myoglobin (154 aa).

The 147-residue stretch at 2 to 148 (GLSDGEWQLV…FRNDMAAKYK (147 aa)) folds into the Globin domain. Ser4 bears the Phosphoserine mark. His65 is a binding site for nitrite. His65 contacts O2. Residue Thr68 is modified to Phosphothreonine. Residue His94 coordinates heme b.

This sequence belongs to the globin family. Monomeric.

The protein localises to the cytoplasm. Its subcellular location is the sarcoplasm. It catalyses the reaction Fe(III)-heme b-[protein] + nitric oxide + H2O = Fe(II)-heme b-[protein] + nitrite + 2 H(+). The catalysed reaction is H2O2 + AH2 = A + 2 H2O. Functionally, monomeric heme protein which primary function is to store oxygen and facilitate its diffusion within muscle tissues. Reversibly binds oxygen through a pentacoordinated heme iron and enables its timely and efficient release as needed during periods of heightened demand. Depending on the oxidative conditions of tissues and cells, and in addition to its ability to bind oxygen, it also has a nitrite reductase activity whereby it regulates the production of bioactive nitric oxide. Under stress conditions, like hypoxia and anoxia, it also protects cells against reactive oxygen species thanks to its pseudoperoxidase activity. The chain is Myoglobin (MB) from Ochotona curzoniae (Black-lipped pika).